The chain runs to 186 residues: Lipid A palmitoyltransferase PagP (186 aa).

Positions 1–25 are cleaved as a signal peptide; sequence MNVSKYVAIFSFVFIQLISVGKVFA. Active-site residues include H58, D101, and S102.

It belongs to the lipid A palmitoyltransferase family. In terms of assembly, homodimer.

It localises to the cell outer membrane. The catalysed reaction is lipid A (E. coli) + a 1-hexadecanoyl-2-acyl-sn-glycero-3-phosphocholine = hepta-acyl lipid A (E. coli) + a 2-acyl-sn-glycero-3-phosphocholine. The enzyme catalyses lipid IIA + a 1-hexadecanoyl-2-acyl-sn-glycero-3-phosphocholine = lipid IIB + a 2-acyl-sn-glycero-3-phosphocholine. It catalyses the reaction lipid IVA (E. coli) + a 1-hexadecanoyl-2-acyl-sn-glycero-3-phosphocholine = lipid IVB (E. coli) + a 2-acyl-sn-glycero-3-phosphocholine. Functionally, transfers a palmitate residue from the sn-1 position of a phospholipid to the N-linked hydroxymyristate on the proximal unit of lipid A or its precursors. This is Lipid A palmitoyltransferase PagP from Escherichia coli (strain ATCC 55124 / KO11FL).